The primary structure comprises 376 residues: MQETDRDIHISDGTMNKEEQSPNNEEMVEAFRNLLLLHGHLPDKHGDHNTLRRFLKMRDFDLEKSKEAFLNYMKWRVDYKVDLISQKFKFEEYGEVKKHYPHGFHKVDKTGRPIYIERLGMTDLNAFLKATTIERYVNYHIKEQEKTMSLRYPACSIASDKHVSSTTTILDVSGVGMSNFSKPARSLFMEIQKIDSNYYPETLHRLFVVNASSGFRMLWLALKTFLDARTLAKVQVLGPNYLGELLEAIEPSNLPTFLGGNCTCSDHGGCLFSDEGPWNDPGIKEKIEEPSTIEDAHSETMDKVSENAPANQKESLGEVMITMEKYAALKTAVKDSQKRIEMLEISLHETKKVLNGLAEIIEAIQPNQPITKCKPV.

Basic and acidic residues predominate over residues 1–20 (MQETDRDIHISDGTMNKEEQ). The interval 1-24 (MQETDRDIHISDGTMNKEEQSPNN) is disordered. The region spanning 92 to 266 (EYGEVKKHYP…FLGGNCTCSD (175 aa)) is the CRAL-TRIO domain. The stretch at 323–357 (MEKYAALKTAVKDSQKRIEMLEISLHETKKVLNGL) forms a coiled coil.

This sequence belongs to the SFH family.

Its subcellular location is the golgi apparatus membrane. The protein resides in the cell membrane. Functionally, required for transport of secretory proteins from the Golgi complex. Catalyzes the transfer of phosphatidylinositol and phosphatidylcholine between membranes in vitro. This Arabidopsis thaliana (Mouse-ear cress) protein is Phosphatidylinositol/phosphatidylcholine transfer protein SFH11 (SFH11).